Here is a 106-residue protein sequence, read N- to C-terminus: Large ribosomal subunit protein uL24 (106 aa).

The disordered stretch occupies residues 69-106; that stretch reads SNLNPVDPKTGKATRVGRKVSSEGTLVRYSKKSGEEIK.

Belongs to the universal ribosomal protein uL24 family. Part of the 50S ribosomal subunit.

Functionally, one of two assembly initiator proteins, it binds directly to the 5'-end of the 23S rRNA, where it nucleates assembly of the 50S subunit. In terms of biological role, one of the proteins that surrounds the polypeptide exit tunnel on the outside of the subunit. This Bacteroides fragilis (strain ATCC 25285 / DSM 2151 / CCUG 4856 / JCM 11019 / LMG 10263 / NCTC 9343 / Onslow / VPI 2553 / EN-2) protein is Large ribosomal subunit protein uL24.